A 63-amino-acid polypeptide reads, in one-letter code: Lysis protein (63 aa).

The chain crosses the membrane as a helical span at residues 21–43; sequence LYVWIALAIVLSDFTSIFSHWIW.

It belongs to the Leviviricetes lysis protein family.

It is found in the host cell inner membrane. It localises to the host cell outer membrane. Functionally, induces the formation of specific membrane adhesion sites between the inner and outer membranes, apparently leading to host cell lysis. Lysis may be performed via activation of host murein hydrolases. This Escherichia coli (Bacteriophage GA) protein is Lysis protein.